The following is a 339-amino-acid chain: UDP-glucose 4-epimerase (339 aa).

NAD(+) contacts are provided by residues Phe12 to Ile13, Asp32 to Ser37, Asp59 to Ile60, Phe81 to Lys85, Asn100, Ser125, Tyr150, Lys154, and Phe179. Residues Ser125 and Tyr150 each contribute to the substrate site. Catalysis depends on Tyr150, which acts as the Proton acceptor. Substrate contacts are provided by residues Asn180, Asn200–Leu201, Ala217–Phe219, Arg232, and Arg293–Asp296.

Belongs to the NAD(P)-dependent epimerase/dehydratase family. In terms of assembly, homodimer. NAD(+) serves as cofactor.

The catalysed reaction is UDP-alpha-D-glucose = UDP-alpha-D-galactose. Its pathway is carbohydrate metabolism; galactose metabolism. Involved in the metabolism of galactose. Plays an essential role in the incorporation of galactose into meningococcal lipopolysaccharide surface molecules, which are important for pathogenesis. Catalyzes the conversion of UDP-galactose (UDP-Gal) to UDP-glucose (UDP-Glc) through a mechanism involving the transient reduction of NAD. The polypeptide is UDP-glucose 4-epimerase (galE) (Neisseria meningitidis serogroup B (strain ATCC BAA-335 / MC58)).